The following is a 284-amino-acid chain: Efem/EfeO family lipoprotein (284 aa).

Residues Met-1–Ala-17 form the signal peptide. Residue Cys-18 is the site of N-palmitoyl cysteine attachment. A lipid anchor (S-diacylglycerol cysteine) is attached at Cys-18.

The protein belongs to the EfeM/EfeO family.

The protein localises to the cell membrane. In Staphylococcus aureus (strain MSSA476), this protein is Efem/EfeO family lipoprotein.